The following is a 192-amino-acid chain: Potassium-transporting ATPase KdpC subunit (192 aa).

Residues Pro-7–Met-27 traverse the membrane as a helical segment.

It belongs to the KdpC family. As to quaternary structure, the system is composed of three essential subunits: KdpA, KdpB and KdpC.

It is found in the cell inner membrane. Its function is as follows. Part of the high-affinity ATP-driven potassium transport (or Kdp) system, which catalyzes the hydrolysis of ATP coupled with the electrogenic transport of potassium into the cytoplasm. This subunit acts as a catalytic chaperone that increases the ATP-binding affinity of the ATP-hydrolyzing subunit KdpB by the formation of a transient KdpB/KdpC/ATP ternary complex. The protein is Potassium-transporting ATPase KdpC subunit of Paraburkholderia phytofirmans (strain DSM 17436 / LMG 22146 / PsJN) (Burkholderia phytofirmans).